Consider the following 347-residue polypeptide: MGKIHRPRRGSLAYSPRKRAKSIVPRIRKWPKDSEVRMLGFAGYKAGMTHILMIDDRPGLTKGKEIFMPVTVVEVPPLFVYGIRAYRQGYLGLETATEVWFHELNDYVKRRIKTLPKDYNEEAFQAKLGQLEDLVNDGEIVDVRLLVHTQPWLIKLKKKPEVMEYAIGGDDVKAKFDYAKEKIGKELRASEVLHEGELLDVIAVTKGKGTQGPVKRWGIKIQFHKAQRAGKGRHVGNLGPWHPTRVMWTVPQAGQMGFHHRTEFNKRLIAIGENGKLKLDEKNEIEITPKGGFPHYGIIRSDFLMIQGTIPGSFKRIIRVRPAIRPPKKKPPVERPQITYISRESKQ.

Residues 325–347 (RPPKKKPPVERPQITYISRESKQ) form a disordered region.

The protein belongs to the universal ribosomal protein uL3 family. In terms of assembly, part of the 50S ribosomal subunit. Forms a cluster with proteins L14 and L24e.

In terms of biological role, one of the primary rRNA binding proteins, it binds directly near the 3'-end of the 23S rRNA, where it nucleates assembly of the 50S subunit. This Thermococcus onnurineus (strain NA1) protein is Large ribosomal subunit protein uL3.